The primary structure comprises 150 residues: Troponin C, isoform 2A (150 aa).

Residue M1 is modified to N-acetylmethionine. EF-hand domains follow at residues 7–42, 43–78, 83–118, and 119–150; these read EQIGALQKAFDSFDTDSKGFITPETVGVILRMMGVK, ISEKNLQEVIAETDEDGSGELEFEEFVELAAKFLIE, ALKTELREAFRVYDKEGNGYITTDVLKEILRELDNR, and LTEEDLDSIIEEVDEDGSGTLDFNEFMEMMNG. Ca(2+) is bound by residues D56, D58, S60, E62, and E67. The Ca(2+) site is built by D132, D134, S136, T138, and E143.

This sequence belongs to the troponin C family.

Functionally, troponin is the central regulatory protein of striated muscle contraction. Tn consists of three components: Tn-I which is the inhibitor of actomyosin ATPase, Tn-T which contains the binding site for tropomyosin and Tn-C. The binding of calcium to Tn-C abolishes the inhibitory action of Tn on actin filaments. The sequence is that of Troponin C, isoform 2A from Homarus americanus (American lobster).